Consider the following 89-residue polypeptide: Small ribosomal subunit protein uS15 (89 aa).

It belongs to the universal ribosomal protein uS15 family. In terms of assembly, part of the 30S ribosomal subunit. Forms a bridge to the 50S subunit in the 70S ribosome, contacting the 23S rRNA.

One of the primary rRNA binding proteins, it binds directly to 16S rRNA where it helps nucleate assembly of the platform of the 30S subunit by binding and bridging several RNA helices of the 16S rRNA. In terms of biological role, forms an intersubunit bridge (bridge B4) with the 23S rRNA of the 50S subunit in the ribosome. The sequence is that of Small ribosomal subunit protein uS15 from Staphylococcus carnosus (strain TM300).